The chain runs to 126 residues: RutC family protein bbp_334 (126 aa).

It belongs to the RutC family.

In Buchnera aphidicola subsp. Baizongia pistaciae (strain Bp), this protein is RutC family protein bbp_334.